A 1085-amino-acid polypeptide reads, in one-letter code: Protein IFH1 (1085 aa).

6 disordered regions span residues 1–251 (MAGK…QQAL), 283–302 (KNKE…VMLG), 457–493 (SKLK…TSNV), 507–622 (DDEN…DSSV), 676–700 (VDDE…IGSK), and 747–774 (QLRE…GDEL). Polar residues-rich tracts occupy residues 9-18 (KSTINHSTHS) and 39-48 (RQSPPTLSTT). Low complexity predominate over residues 54 to 66 (SLIYSSESSLSDV). Basic residues predominate over residues 76 to 85 (NPHKIKRKAK). The segment covering 120 to 165 (DGEESENEEEESEEEEEDDDEDDDDDDDDGSDSDSDSETSSDDENI) has biased composition (acidic residues). The segment covering 184-197 (AMNTNSNTLYSSRE) has biased composition (polar residues). The residue at position 208 (Ser-208) is a Phosphoserine. The span at 209–239 (PKKENEEEQKEEKEKEKEEQQKQQESNKKEV) shows a compositional bias: basic and acidic residues. Polar residues predominate over residues 241 to 251 (GSGTTTTQQAL). The span at 283–297 (KNKENNGNEEDKLDS) shows a compositional bias: basic and acidic residues. Basic residues predominate over residues 474–483 (QRRKLYKKTQ). Residues 484 to 493 (KPSTRTTSNV) show a composition bias toward polar residues. Basic residues predominate over residues 513 to 524 (HKSKKGRHKSGK). Polar residues predominate over residues 546–557 (STHSTVLNSGKY). The span at 584-599 (ETSHDADTDEELRALD) shows a compositional bias: basic and acidic residues. Composition is skewed to acidic residues over residues 607-620 (TELD…DDDS) and 676-686 (VDDESTDEDDN). A compositionally biased stretch (basic and acidic residues) spans 747 to 764 (QLREQHQRAQTPDVKREG). Ser-1041 carries the phosphoserine modification.

It belongs to the IFH1 family.

The protein localises to the nucleus. Functionally, transcriptional coactivator that together with FHL1 regulates the expression of rRNA and ribosomal protein genes. Its activity is negatively regulated by environmental stress. In Saccharomyces cerevisiae (strain ATCC 204508 / S288c) (Baker's yeast), this protein is Protein IFH1 (IFH1).